Reading from the N-terminus, the 194-residue chain is Small ribosomal subunit protein uS4c (194 aa).

The 62-residue stretch at 82–143 (MRLDNILFRL…KQRSKALIQN (62 aa)) folds into the S4 RNA-binding domain.

Belongs to the universal ribosomal protein uS4 family. Part of the 30S ribosomal subunit. Contacts protein S5. The interaction surface between S4 and S5 is involved in control of translational fidelity.

Its subcellular location is the plastid. It localises to the chloroplast. In terms of biological role, one of the primary rRNA binding proteins, it binds directly to 16S rRNA where it nucleates assembly of the body of the 30S subunit. With S5 and S12 plays an important role in translational accuracy. The sequence is that of Small ribosomal subunit protein uS4c (rps4) from Sisyrinchium striatum (Satin flower).